Here is a 268-residue protein sequence, read N- to C-terminus: 4-hydroxy-tetrahydrodipicolinate reductase (268 aa).

8-13 (GAAGRM) serves as a coordination point for NAD(+). R36 contributes to the NADP(+) binding site. NAD(+)-binding positions include 99-101 (GTT) and 123-126 (AANF). The active-site Proton donor/acceptor is H156. (S)-2,3,4,5-tetrahydrodipicolinate is bound at residue H157. The Proton donor role is filled by K160. Residue 166 to 167 (GT) participates in (S)-2,3,4,5-tetrahydrodipicolinate binding.

Belongs to the DapB family.

The protein localises to the cytoplasm. It catalyses the reaction (S)-2,3,4,5-tetrahydrodipicolinate + NAD(+) + H2O = (2S,4S)-4-hydroxy-2,3,4,5-tetrahydrodipicolinate + NADH + H(+). It carries out the reaction (S)-2,3,4,5-tetrahydrodipicolinate + NADP(+) + H2O = (2S,4S)-4-hydroxy-2,3,4,5-tetrahydrodipicolinate + NADPH + H(+). It functions in the pathway amino-acid biosynthesis; L-lysine biosynthesis via DAP pathway; (S)-tetrahydrodipicolinate from L-aspartate: step 4/4. In terms of biological role, catalyzes the conversion of 4-hydroxy-tetrahydrodipicolinate (HTPA) to tetrahydrodipicolinate. This Pseudomonas fluorescens (strain SBW25) protein is 4-hydroxy-tetrahydrodipicolinate reductase.